A 270-amino-acid chain; its full sequence is Gap junction beta-3 protein (270 aa).

At 1 to 20 the chain is on the cytoplasmic side; it reads MDWKTLQALLSGVNKYSTAF. Residues 21 to 40 form a helical membrane-spanning segment; it reads GRIWLSVVFVFRVLVYVVAA. Residues 41 to 75 lie on the Extracellular side of the membrane; that stretch reads ERVWGDEQKDFDCNTKQPGCTNVCYDNYFPISNIR. Residues 76-98 traverse the membrane as a helical segment; that stretch reads LWALQLIFVTCPSLLVILHVAYR. Topologically, residues 99–126 are cytoplasmic; that stretch reads EERERRHRQKHGDQCAKLYDNAGKKHGG. The helical transmembrane segment at 127–149 threads the bilayer; the sequence is LWWTYLFSLIFKLIIEFLFLYLL. The Extracellular portion of the chain corresponds to 150–187; sequence HTLWHGFNMPRLVQCANVAPCPNIVDCYIARPTEKKIF. A helical membrane pass occupies residues 188 to 210; the sequence is TYFMVGASAVCIVLTICELCYLI. Residues 211-270 lie on the Cytoplasmic side of the membrane; sequence CHRVLRGLHKDKPRGGCSPSSSASRASTCRCHHKLVEAGEVDPDPGNNKLQASAPNLTPI. The interval 250–270 is disordered; that stretch reads EVDPDPGNNKLQASAPNLTPI. Residues 258-270 are compositionally biased toward polar residues; sequence NKLQASAPNLTPI.

The protein belongs to the connexin family. Beta-type (group I) subfamily. In terms of assembly, a connexon is composed of a hexamer of connexins. Interacts with CNST.

It localises to the cell membrane. The protein localises to the cell junction. Its subcellular location is the gap junction. One gap junction consists of a cluster of closely packed pairs of transmembrane channels, the connexons, through which materials of low MW diffuse from one cell to a neighboring cell. This chain is Gap junction beta-3 protein (GJB3), found in Homo sapiens (Human).